A 142-amino-acid chain; its full sequence is Acidic phospholipase A2 Bc-PL (142 aa).

An N-terminal signal peptide occupies residues 1–9 (AVCVSLLGA). The propeptide occupies 10-17 (ANIPPQPL). 7 cysteine pairs are disulfide-bonded: Cys28/Cys94, Cys44/Cys141, Cys46/Cys62, Cys61/Cys122, Cys68/Cys115, Cys78/Cys108, and Cys101/Cys113. Ca(2+)-binding residues include Tyr45, Gly47, and Gly49. His65 is a catalytic residue. Asp66 is a binding site for Ca(2+). Asp116 is a catalytic residue.

This sequence belongs to the phospholipase A2 family. Group I subfamily. D49 sub-subfamily. The cofactor is Ca(2+). As to expression, expressed by the venom gland.

The protein localises to the secreted. The enzyme catalyses a 1,2-diacyl-sn-glycero-3-phosphocholine + H2O = a 1-acyl-sn-glycero-3-phosphocholine + a fatty acid + H(+). Functionally, PLA2 catalyzes the calcium-dependent hydrolysis of the 2-acyl groups in 3-sn-phosphoglycerides. This chain is Acidic phospholipase A2 Bc-PL, found in Bungarus candidus (Malayan krait).